A 182-amino-acid chain; its full sequence is MKVAVASRNPNKVRAVEEAYRLFGIPARVSSVDKPPSLPPQPVGLEAVVAGAVERAKAALAAAGEAEHGVGIEAGALEAGGRHLDVTVAAVADRGGLVTLGFGPAFQIPDVFLGDVLRGVELGVLAERHFGKAAVGYREGIIGLLTRGRVTRLDLNVVAVAMALVPRLPANAQLYRFWKTAP.

Glutamate 65 is a Mg(2+) binding site. 65 to 66 (EA) contacts substrate.

Belongs to the YjjX NTPase family. Homodimer. Requires Mg(2+) as cofactor. Mn(2+) serves as cofactor.

It carries out the reaction XTP + H2O = XDP + phosphate + H(+). The enzyme catalyses ITP + H2O = IDP + phosphate + H(+). Functionally, phosphatase that hydrolyzes non-canonical purine nucleotides such as XTP and ITP to their respective diphosphate derivatives. Probably excludes non-canonical purines from DNA/RNA precursor pool, thus preventing their incorporation into DNA/RNA and avoiding chromosomal lesions. In Pyrobaculum neutrophilum (strain DSM 2338 / JCM 9278 / NBRC 100436 / V24Sta) (Thermoproteus neutrophilus), this protein is Probable inosine/xanthosine triphosphatase.